Here is a 104-residue protein sequence, read N- to C-terminus: Replication restart protein PriB (104 aa).

Residues 2-101 form the SSB domain; the sequence is TNRLVLSGTV…LHAEQIELID (100 aa). A disulfide bridge links cysteine 48 with cysteine 80. The L45 loop motif lies at 82-89; the sequence is KAKNGLSK.

It belongs to the PriB family. Homodimer. Primosome assembly occurs via a 'hand-off' mechanism. PriA binds to replication forks, subsequently PriB then DnaT bind; DnaT then displaces ssDNA to generate the helicase loading substrate, which allows DnaC to load helicase DnaB onto the fork. ssDNA is displaced from the PriB-ssDNA complex by DnaT. In a PriA-PriB-replication fork structure, movement of the PriA CRR domain exposes a surface to which PriB binds and contacts ssDNA emerging from the PriA pore. Binds PriA; binding is improved in the presence of ssDNA. Weakly binds DnaT; binding is improved in the presence of ssDNA; as DnaT levels increase PriB dissociates from ssDNA. Component of the replication restart primosome, which is composed of PriA, PriB, PriC, DnaB and DnaT; DnaG primase associates transiently with this complex. Component of the preprimosomal complex composed of one monomer of PriC and DnaT, two monomers of PriA, two dimers of PriB and one hexamer of DnaB. Post-translationally, an intersubunit disulfide bond is seen in some crystals.

Functionally, involved in the restart of stalled replication forks, which reloads the replicative helicase (DnaB) on sites other than the origin of replication; the PriA-PriB pathway is the major replication restart pathway. There are several restart pathways, the PriA-PriB pathway is subdivided into 2 distinct pathways. priB and priC have redundant roles in the cell. During primosome assembly it facilitates complex formation between PriA and DnaT on DNA; stabilizes PriA on DNA, presumably by preventing or inhibiting PriA DNA translocation activity. Forms a branched DNA-PriA-PriB complex when the lagging strand is single-stranded (ss)DNA. Binds ssDNA in the presence and absence of ssDNA DNA-binding protein (SSB), does not bind branched structures. DNA binding, forming spiral filaments on ssDNA, is cooperative. Stimulates the helicase activity of PriA. The homodimer binds 12 nucleotides of ssDNA. Binds homo-pyrimidine tracts better than homo-purine tracts. In terms of biological role, genetic interactions among priB, dam, lexA, nagC, polA, rdgB, rdgB, rep and uup link the PriA-PriB replication restart pathway to DNA double-strand break repair. This Escherichia coli (strain K12) protein is Replication restart protein PriB.